Consider the following 336-residue polypeptide: DNA-directed RNA polymerase subunit alpha (336 aa).

Positions 1 to 232 (MIQKNWQELI…DQLGLFVNFE (232 aa)) are alpha N-terminal domain (alpha-NTD). Positions 248-336 (FNPALLKKVD…ELAKRYEDQY (89 aa)) are alpha C-terminal domain (alpha-CTD).

Belongs to the RNA polymerase alpha chain family. In terms of assembly, homodimer. The RNAP catalytic core consists of 2 alpha, 1 beta, 1 beta' and 1 omega subunit. When a sigma factor is associated with the core the holoenzyme is formed, which can initiate transcription.

It catalyses the reaction RNA(n) + a ribonucleoside 5'-triphosphate = RNA(n+1) + diphosphate. In terms of biological role, DNA-dependent RNA polymerase catalyzes the transcription of DNA into RNA using the four ribonucleoside triphosphates as substrates. The sequence is that of DNA-directed RNA polymerase subunit alpha from Chelativorans sp. (strain BNC1).